Here is a 236-residue protein sequence, read N- to C-terminus: Biosynthetic peptidoglycan transglycosylase (236 aa).

The helical transmembrane segment at 12-31 (ALLWFAAGSVLVVLVLRWVP) threads the bilayer.

This sequence belongs to the glycosyltransferase 51 family.

Its subcellular location is the cell inner membrane. It carries out the reaction [GlcNAc-(1-&gt;4)-Mur2Ac(oyl-L-Ala-gamma-D-Glu-L-Lys-D-Ala-D-Ala)](n)-di-trans,octa-cis-undecaprenyl diphosphate + beta-D-GlcNAc-(1-&gt;4)-Mur2Ac(oyl-L-Ala-gamma-D-Glu-L-Lys-D-Ala-D-Ala)-di-trans,octa-cis-undecaprenyl diphosphate = [GlcNAc-(1-&gt;4)-Mur2Ac(oyl-L-Ala-gamma-D-Glu-L-Lys-D-Ala-D-Ala)](n+1)-di-trans,octa-cis-undecaprenyl diphosphate + di-trans,octa-cis-undecaprenyl diphosphate + H(+). It participates in cell wall biogenesis; peptidoglycan biosynthesis. Its function is as follows. Peptidoglycan polymerase that catalyzes glycan chain elongation from lipid-linked precursors. This is Biosynthetic peptidoglycan transglycosylase from Pseudomonas savastanoi pv. phaseolicola (strain 1448A / Race 6) (Pseudomonas syringae pv. phaseolicola (strain 1448A / Race 6)).